Consider the following 175-residue polypeptide: Large ribosomal subunit protein uL10 (175 aa).

It belongs to the universal ribosomal protein uL10 family. In terms of assembly, part of the ribosomal stalk of the 50S ribosomal subunit. The N-terminus interacts with L11 and the large rRNA to form the base of the stalk. The C-terminus forms an elongated spine to which L12 dimers bind in a sequential fashion forming a multimeric L10(L12)X complex.

Forms part of the ribosomal stalk, playing a central role in the interaction of the ribosome with GTP-bound translation factors. This is Large ribosomal subunit protein uL10 from Psychrobacter sp. (strain PRwf-1).